The sequence spans 297 residues: HTH-type transcriptional regulator ArgP (297 aa).

The region spanning 4–60 (PDYRTLQALDAVIRERGFERAAQKLCITQSAVSQRIKQLENLFGQPLLVRTIPPRPT) is the HTH lysR-type domain. The segment at residues 21-40 (FERAAQKLCITQSAVSQRIK) is a DNA-binding region (H-T-H motif).

This sequence belongs to the LysR transcriptional regulatory family. Homodimer.

Functionally, controls the transcription of genes involved in arginine and lysine metabolism. This chain is HTH-type transcriptional regulator ArgP, found in Pectobacterium carotovorum subsp. carotovorum (strain PC1).